The chain runs to 502 residues: Activin receptor type-1-like (502 aa).

The signal sequence occupies residues 1–22 (MTLGSFRRGLLMLSVAFGLTRG). Topologically, residues 23-119 (DLAKPSKLVN…EEPEVDAHLP (97 aa)) are extracellular. N32 is a glycosylation site (N-linked (GlcNAc...) asparagine). 3 disulfides stabilise this stretch: C33–C50, C35–C40, and C45–C68. The segment at 72–75 (NQEL) is mediates specificity for BMP ligand. 2 disulfides stabilise this stretch: C76–C88 and C89–C94. Residue N97 is glycosylated (N-linked (GlcNAc...) asparagine). Residues 120-140 (LILGPVLALPVLVALGALGLW) form a helical membrane-spanning segment. Topologically, residues 141-502 (RVRRRQEKQR…HNPEKPKVIH (362 aa)) are cytoplasmic. Phosphoserine occurs at positions 154, 159, and 160. The GS domain occupies 171-200 (SMLGDFLDSDCTTGSGSGLPFLVQRTVARQ). One can recognise a Protein kinase domain in the interval 201 to 502 (VALVECVGKG…HNPEKPKVIH (302 aa)). Residues 207–215 (VGKGRYGEV) and K228 contribute to the ATP site. The active-site Proton acceptor is D329.

This sequence belongs to the protein kinase superfamily. TKL Ser/Thr protein kinase family. TGFB receptor subfamily. As to quaternary structure, interacts with TSC22D1/TSC-22. Requires Mg(2+) as cofactor. Mn(2+) serves as cofactor.

Its subcellular location is the cell membrane. It carries out the reaction L-threonyl-[receptor-protein] + ATP = O-phospho-L-threonyl-[receptor-protein] + ADP + H(+). The enzyme catalyses L-seryl-[receptor-protein] + ATP = O-phospho-L-seryl-[receptor-protein] + ADP + H(+). Type I receptor for TGF-beta family ligands BMP9/GDF2 and BMP10 and important regulator of normal blood vessel development. On ligand binding, forms a receptor complex consisting of two type II and two type I transmembrane serine/threonine kinases. Type II receptors phosphorylate and activate type I receptors which autophosphorylate, then bind and activate SMAD transcriptional regulators. May bind activin as well. In Mus musculus (Mouse), this protein is Activin receptor type-1-like (Acvrl1).